We begin with the raw amino-acid sequence, 577 residues long: Galectin-3-binding protein (577 aa).

The N-terminal stretch at 1 to 18 is a signal peptide; it reads MALLWLLSVFLLVPGTQG. Residues 24 to 124 enclose the SRCR domain; sequence MRLVNGASAN…HEKDAGVVCS (101 aa). Cystine bridges form between C49–C113, C62–C123, and C93–C103. N69 carries an N-linked (GlcNAc...) asparagine glycan. Residue N125 is glycosylated (N-linked (GlcNAc...) asparagine). The BTB domain occupies 153 to 221; the sequence is CDLFIQVTGQ…FYSRRIEVSM (69 aa). The BACK domain occupies 260–360; sequence PLDLYAYARA…MLPQELFELQ (101 aa). N-linked (GlcNAc...) asparagine glycans are attached at residues N362, N398, N543, and N572.

Homodimers and homomultimers. The multimers form ring-like structures with a diameter of 30-40 nm. Binds LGALS1 and LGALS3. Binds ITGB1, COL4A1, COL5A1, COL6A1, FN1 and NID. Interacts with PPIC (in vitro). The unglycosylated form interacts with PDE4DIP isoform 2/MMG8/SMYLE; this interaction may connect a pericentrosomal complex to the gamma-tubulin ring complex (gamma-TuRC) to promote microtubule assembly and acetylation. Post-translationally, N-glycosylated. Detected in embryo, liver, spleen, kidney, lung, heart, intestine, thymus and lymph node.

Its subcellular location is the secreted. It is found in the extracellular space. The protein resides in the extracellular matrix. Its function is as follows. Promotes integrin-mediated cell adhesion. May stimulate host defense against viruses and tumor cells. The chain is Galectin-3-binding protein (Lgals3bp) from Mus musculus (Mouse).